The chain runs to 412 residues: Trehalose synthase (412 aa).

Belongs to the glycosyltransferase group 1 family. Glycosyltransferase 4 subfamily. In terms of assembly, homodimer. Requires Mg(2+) as cofactor.

It catalyses the reaction an NDP-alpha-D-glucose + D-glucose = alpha,alpha-trehalose + a ribonucleoside 5'-diphosphate + H(+). Its function is as follows. Synthesizes trehalose from ADP-glucose and glucose. Has a much lower activity toward UDP-glucose and GDP-glucose. The reaction is reversible, the equilibrium strongly favors trehalose synthesis. This Pyrococcus furiosus (strain ATCC 43587 / DSM 3638 / JCM 8422 / Vc1) protein is Trehalose synthase.